We begin with the raw amino-acid sequence, 640 residues long: SUMO-activating enzyme subunit 2 (640 aa).

ATP is bound by residues 24 to 29 (GAGGIG), Asp-48, 56 to 59 (NLNR), Lys-72, 95 to 96 (SI), and 117 to 122 (DNRAAR). Zn(2+) contacts are provided by Cys-158 and Cys-161. A Glycyl lysine isopeptide (Lys-Gly) (interchain with G-Cter in SUMO1) cross-link involves residue Lys-164. The active-site Glycyl thioester intermediate is the Cys-173. A Glycyl lysine isopeptide (Lys-Gly) (interchain with G-Cter in SUMO) cross-link involves residue Lys-190. The disordered stretch occupies residues 202-231 (ADQEVSPDRADPEAAWEPTEAEARARASNE). A Phosphoserine modification is found at Ser-207. Basic and acidic residues predominate over residues 222-231 (AEARARASNE). Lys-236 is covalently cross-linked (Glycyl lysine isopeptide (Lys-Gly) (interchain with G-Cter in SUMO1); alternate). Residues Lys-236 and Lys-257 each participate in a glycyl lysine isopeptide (Lys-Gly) (interchain with G-Cter in SUMO2); alternate cross-link. Glycyl lysine isopeptide (Lys-Gly) (interchain with G-Cter in SUMO); alternate cross-links involve residues Lys-257 and Lys-271. Lys-271 is modified (N6-acetyllysine; alternate). Lys-275 is covalently cross-linked (Glycyl lysine isopeptide (Lys-Gly) (interchain with G-Cter in SUMO)). Residue Lys-371 forms a Glycyl lysine isopeptide (Lys-Gly) (interchain with G-Cter in SUMO2) linkage. Lys-420 participates in a covalent cross-link: Glycyl lysine isopeptide (Lys-Gly) (interchain with G-Cter in SUMO1); alternate. A Glycyl lysine isopeptide (Lys-Gly) (interchain with G-Cter in SUMO2); alternate cross-link involves residue Lys-420. Residues Cys-441 and Cys-444 each coordinate Zn(2+). Ser-507 bears the Phosphoserine mark. Lys-540 is covalently cross-linked (Glycyl lysine isopeptide (Lys-Gly) (interchain with G-Cter in SUMO2)). Positions 551–563 (PEKVGPKQAEDAA) are enriched in basic and acidic residues. A disordered region spans residues 551 to 640 (PEKVGPKQAE…EELDDVIALD (90 aa)). Residues 565-582 (SITNGSDDGAQPSTSTAQ) show a composition bias toward polar residues. The segment covering 583–597 (EQDDVLIVDSDEEDS) has biased composition (acidic residues). The residue at position 592 (Ser-592) is a Phosphoserine. Positions 606 to 630 (EERSRKRKLDEKENLSAKRSRIEQK) are enriched in basic and acidic residues. Lys-611 is covalently cross-linked (Glycyl lysine isopeptide (Lys-Gly) (interchain with G-Cter in SUMO)). Residue Lys-613 forms a Glycyl lysine isopeptide (Lys-Gly) (interchain with G-Cter in SUMO); alternate linkage. At Lys-613 the chain carries N6-acetyllysine; alternate. Residues Lys-617 and Lys-623 each participate in a glycyl lysine isopeptide (Lys-Gly) (interchain with G-Cter in SUMO) cross-link. A compositionally biased stretch (acidic residues) spans 631 to 640 (EELDDVIALD).

It belongs to the ubiquitin-activating E1 family. In terms of assembly, heterodimer of SAE1 and UBA2/SAE2. The heterodimer corresponds to the two domains that are encoded on a single polypeptide chain in ubiquitin-activating enzyme E1. Interacts with UBE2I. In terms of processing, sumoylated with SUMO1 and SUMO2/3 and by UBC9. Sumoylation at Lys-236 inhibits enzymatic activity. Sumoylation at the C-terminal lysine cluster plays an essential role in nuclear trafficking.

It localises to the cytoplasm. It is found in the nucleus. It functions in the pathway protein modification; protein sumoylation. Its function is as follows. The heterodimer acts as an E1 ligase for SUMO1, SUMO2, SUMO3, and probably SUMO4. It mediates ATP-dependent activation of SUMO proteins followed by formation of a thioester bond between a SUMO protein and a conserved active site cysteine residue on UBA2/SAE2. This Homo sapiens (Human) protein is SUMO-activating enzyme subunit 2 (UBA2).